The chain runs to 167 residues: Large ribosomal subunit protein uL10 (167 aa).

It belongs to the universal ribosomal protein uL10 family. Part of the ribosomal stalk of the 50S ribosomal subunit. The N-terminus interacts with L11 and the large rRNA to form the base of the stalk. The C-terminus forms an elongated spine to which L12 dimers bind in a sequential fashion forming a multimeric L10(L12)X complex.

Forms part of the ribosomal stalk, playing a central role in the interaction of the ribosome with GTP-bound translation factors. This is Large ribosomal subunit protein uL10 from Tolumonas auensis (strain DSM 9187 / NBRC 110442 / TA 4).